A 44-amino-acid polypeptide reads, in one-letter code: Small ribosomal subunit protein eS7 (44 aa).

Residues 18–34 (KPTRKSRIKNKQKRPRS) show a composition bias toward basic residues. The segment at 18–44 (KPTRKSRIKNKQKRPRSRTLTAVHDAI) is disordered.

It belongs to the eukaryotic ribosomal protein eS7 family. In terms of assembly, component of the small ribosomal subunit.

Its subcellular location is the cytoplasm. The protein resides in the cytoskeleton. It localises to the microtubule organizing center. It is found in the centrosome. The protein localises to the nucleus. Functionally, component of the small ribosomal subunit. The ribosome is a large ribonucleoprotein complex responsible for the synthesis of proteins in the cell. Required for rRNA maturation. The sequence is that of Small ribosomal subunit protein eS7 (rps7) from Salmo salar (Atlantic salmon).